We begin with the raw amino-acid sequence, 400 residues long: Nicotinate phosphoribosyltransferase (400 aa).

Phosphohistidine; by autocatalysis is present on H220.

Belongs to the NAPRTase family. Post-translationally, transiently phosphorylated on a His residue during the reaction cycle. Phosphorylation strongly increases the affinity for substrates and increases the rate of nicotinate D-ribonucleotide production. Dephosphorylation regenerates the low-affinity form of the enzyme, leading to product release.

The catalysed reaction is nicotinate + 5-phospho-alpha-D-ribose 1-diphosphate + ATP + H2O = nicotinate beta-D-ribonucleotide + ADP + phosphate + diphosphate. Its pathway is cofactor biosynthesis; NAD(+) biosynthesis; nicotinate D-ribonucleotide from nicotinate: step 1/1. Functionally, catalyzes the synthesis of beta-nicotinate D-ribonucleotide from nicotinate and 5-phospho-D-ribose 1-phosphate at the expense of ATP. The protein is Nicotinate phosphoribosyltransferase of Enterobacter sp. (strain 638).